Consider the following 264-residue polypeptide: 3-methyl-2-oxobutanoate hydroxymethyltransferase (264 aa).

Aspartate 45 and aspartate 84 together coordinate Mg(2+). 3-methyl-2-oxobutanoate is bound by residues 45 to 46, aspartate 84, and lysine 112; that span reads DS. Glutamate 114 is a Mg(2+) binding site. Residue glutamate 181 is the Proton acceptor of the active site.

It belongs to the PanB family. In terms of assembly, homodecamer; pentamer of dimers. Mg(2+) is required as a cofactor.

It localises to the cytoplasm. It carries out the reaction 3-methyl-2-oxobutanoate + (6R)-5,10-methylene-5,6,7,8-tetrahydrofolate + H2O = 2-dehydropantoate + (6S)-5,6,7,8-tetrahydrofolate. It participates in cofactor biosynthesis; (R)-pantothenate biosynthesis; (R)-pantoate from 3-methyl-2-oxobutanoate: step 1/2. In terms of biological role, catalyzes the reversible reaction in which hydroxymethyl group from 5,10-methylenetetrahydrofolate is transferred onto alpha-ketoisovalerate to form ketopantoate. This is 3-methyl-2-oxobutanoate hydroxymethyltransferase from Cronobacter sakazakii (strain ATCC BAA-894) (Enterobacter sakazakii).